The sequence spans 150 residues: Large ribosomal subunit protein uL15 (150 aa).

Residues 1–13 (MADNDAIKVHDLR) are compositionally biased toward basic and acidic residues. Residues 1–44 (MADNDAIKVHDLRPAPGAKTAKTRVGRGEASKGKTAGRGTKGTK) are disordered.

This sequence belongs to the universal ribosomal protein uL15 family. As to quaternary structure, part of the 50S ribosomal subunit.

In terms of biological role, binds to the 23S rRNA. This is Large ribosomal subunit protein uL15 from Micrococcus luteus (strain ATCC 4698 / DSM 20030 / JCM 1464 / CCM 169 / CCUG 5858 / IAM 1056 / NBRC 3333 / NCIMB 9278 / NCTC 2665 / VKM Ac-2230) (Micrococcus lysodeikticus).